A 171-amino-acid chain; its full sequence is Large ribosomal subunit protein uL10 (171 aa).

Belongs to the universal ribosomal protein uL10 family. As to quaternary structure, part of the ribosomal stalk of the 50S ribosomal subunit. The N-terminus interacts with L11 and the large rRNA to form the base of the stalk. The C-terminus forms an elongated spine to which L12 dimers bind in a sequential fashion forming a multimeric L10(L12)X complex.

Functionally, forms part of the ribosomal stalk, playing a central role in the interaction of the ribosome with GTP-bound translation factors. In Corynebacterium diphtheriae (strain ATCC 700971 / NCTC 13129 / Biotype gravis), this protein is Large ribosomal subunit protein uL10.